A 376-amino-acid chain; its full sequence is Pyrimidine monooxygenase RutA (376 aa).

Residues Ile-61–Lys-62, Asn-127, Glu-136, Arg-152–Tyr-153, and Ser-202 contribute to the FMN site.

Belongs to the NtaA/SnaA/DszA monooxygenase family. RutA subfamily.

It catalyses the reaction uracil + FMNH2 + NADH + O2 = (Z)-3-ureidoacrylate + FMN + NAD(+) + H2O + H(+). It carries out the reaction thymine + FMNH2 + NADH + O2 = (Z)-2-methylureidoacrylate + FMN + NAD(+) + H2O + H(+). Catalyzes the pyrimidine ring opening between N-3 and C-4 by an unusual flavin hydroperoxide-catalyzed mechanism, adding oxygen atoms in the process to yield ureidoacrylate peracid, that immediately reacts with FMN forming ureidoacrylate and FMN-N(5)-oxide. The FMN-N(5)-oxide reacts spontaneously with NADH to produce FMN. Requires the flavin reductase RutF to regenerate FMN in vivo. The polypeptide is Pyrimidine monooxygenase RutA (Methylorubrum extorquens (strain CM4 / NCIMB 13688) (Methylobacterium extorquens)).